A 505-amino-acid chain; its full sequence is Sodium/sialic acid symporter NanT (505 aa).

A run of 5 helical transmembrane segments spans residues 9–29, 45–65, 80–100, 128–148, and 155–175; these read LNYI…VYFA, IPGW…ITFM, IGQY…IPFF, FMLF…LALM, and PLMI…LGGI. Ala-56 lines the Na(+) pocket. An N-acetyl-alpha-neuraminate-binding site is contributed by Thr-58. Residue Leu-59 participates in Na(+) binding. N-acetyl-alpha-neuraminate-binding residues include Ser-60, Thr-63, Gln-82, and Arg-135. Asp-182 serves as a coordination point for Na(+). Transmembrane regions (helical) follow at residues 183–203, 227–247, 280–300, and 318–338; these read VIQG…ICFN, FSWS…FFAS, LVAC…AYYT, and FYVI…AIFA. Na(+) is bound by residues Ala-339, Ser-342, Ser-343, Ser-345, and Ser-346. 4 helical membrane passes run 378–398, 406–426, 435–455, and 457–477; these read TLTV…IMSN, FNSL…LGIF, ALLG…ATDL, and FFFY…LTAP.

It belongs to the sodium:solute symporter (SSF) (TC 2.A.21) family.

It localises to the cell inner membrane. The catalysed reaction is N-acetyl-alpha-neuraminate(out) + 2 Na(+)(out) = N-acetyl-alpha-neuraminate(in) + 2 Na(+)(in). Its function is as follows. Symporter that uses the Na(+) gradient as the driving force for the uptake of the sialic acid N-acetylneuraminic acid (Neu5Ac). Might play a role in persistence after colonization. The protein is Sodium/sialic acid symporter NanT of Aliivibrio fischeri (strain ATCC 700601 / ES114) (Vibrio fischeri).